The sequence spans 534 residues: Chaperonin GroEL 3 (534 aa).

ATP-binding positions include 31–34, G416, 479–481, and D495; these read TLGP and NAL.

It belongs to the chaperonin (HSP60) family. In terms of assembly, forms a cylinder of 14 subunits composed of two heptameric rings stacked back-to-back. Interacts with the co-chaperonin GroES.

It is found in the cytoplasm. It carries out the reaction ATP + H2O + a folded polypeptide = ADP + phosphate + an unfolded polypeptide.. Its function is as follows. Together with its co-chaperonin GroES, plays an essential role in assisting protein folding. The GroEL-GroES system forms a nano-cage that allows encapsulation of the non-native substrate proteins and provides a physical environment optimized to promote and accelerate protein folding. The polypeptide is Chaperonin GroEL 3 (Protochlamydia amoebophila (strain UWE25)).